The following is an 82-amino-acid chain: uncharacterized protein (82 aa).

Positions Met1–Ala19 are cleaved as a signal peptide.

This is an uncharacterized protein from Rickettsia prowazekii (strain Madrid E).